The following is a 102-amino-acid chain: MPEICPICGLPKDLCVCEEIAKEEQKIKVYVTKRRFGKLMTVVDGFDADLIDVKDLAKKLKDICACGGTVKKDSIELQGDHRRKAEETLIKMGFSKDMIDVR.

This sequence belongs to the SUI1 family.

The sequence is that of Protein translation factor SUI1 homolog from Methanococcus maripaludis (strain C5 / ATCC BAA-1333).